Reading from the N-terminus, the 169-residue chain is CKLF-like MARVEL transmembrane domain-containing protein 1 (169 aa).

The MARVEL domain maps to 17–135 (NLKQPETAAA…DAFVVTTKMR (119 aa)). The next 4 helical transmembrane spans lie at 22–42 (ETAA…ITQA), 46–66 (FITI…IYVL), 79–99 (LLDL…AILA), and 110–130 (YVGG…AFVV).

It belongs to the chemokine-like factor family. Highly expressed in testis.

The protein localises to the membrane. The sequence is that of CKLF-like MARVEL transmembrane domain-containing protein 1 (CMTM1) from Homo sapiens (Human).